The sequence spans 4036 residues: Hybrid PKS-NRPS synthetase iliA (4036 aa).

The 433-residue stretch at 7-439 folds into the Ketosynthase family 3 (KS3) domain; the sequence is PEPIAVIGSA…GTNAHAIIES (433 aa). Residues cysteine 181, histidine 318, and histidine 359 each act as for beta-ketoacyl synthase activity in the active site. Residues 561 to 886 are malonyl-CoA:ACP transacylase (MAT) domain; sequence IFTGQGAQWP…LKRNGSDVEA (326 aa). Positions 955–1092 are N-terminal hotdog fold; it reads HELLGRRTPD…GDLVVHLGAD (138 aa). A dehydratase (DH) domain region spans residues 955–1262; sequence HELLGRRTPD…ATNMVGEQDA (308 aa). The 309-residue stretch at 955 to 1263 folds into the PKS/mFAS DH domain; sequence HELLGRRTPD…TNMVGEQDAS (309 aa). Histidine 987 acts as the Proton acceptor; for dehydratase activity in catalysis. Residues 1109 to 1263 form a C-terminal hotdog fold region; it reads LVNIDGERVY…TNMVGEQDAS (155 aa). The active-site Proton donor; for dehydratase activity is aspartate 1168. The segment at 1402–1601 is methyltransferase (MT) domain; the sequence is EDDMLDRFYM…FSGADTVMHD (200 aa). The tract at residues 2136–2277 is ketoreductase (KR) domain; that stretch reads KTYFMVGMAG…SVATVIGNIG (142 aa). Residues 2425–2502 enclose the Carrier 1 domain; it reads EAVAAVVKAF…QVCTWATKKV (78 aa). At serine 2462 the chain carries O-(pantetheine 4'-phosphoryl)serine. Disordered regions lie at residues 2520–2583 and 2597–2621; these read AEKT…KLGT and DADARSESTGSSGMADSDDSSNRPE. Pro residues predominate over residues 2530–2540; that stretch reads APAPDAAPAPA. The interval 2627 to 3054 is condensation (C) domain; sequence IMSQAQSRIW…HLDITECEIY (428 aa). The interval 3088-3485 is adenylation (A) (KR) domain; sequence SLHSDKSAVK…GTLLCLGRLD (398 aa). Residues 3088 to 3485 form a reductase (RED) domain region; sequence SLHSDKSAVK…GTLLCLGRLD (398 aa). In terms of domain architecture, Carrier 2 spans 3596–3675; the sequence is EKMTIREGEV…EMARRIDEHQ (80 aa). Serine 3635 bears the O-(pantetheine 4'-phosphoryl)serine mark.

The protein in the C-terminal section; belongs to the NRP synthetase family.

The enzyme catalyses L-tyrosine + holo-[ACP] + 7 malonyl-CoA + acetyl-CoA + 8 AH2 + 2 S-adenosyl-L-methionine + ATP + 4 H(+) = N-[(4E,6E,10S,12Z,14E)-6,10-dimethyl-3-oxohexadeca-4,6,12,14-tetraenoyl]-L-tyrosyl-[ACP] + 8 A + AMP + 2 S-adenosyl-L-homocysteine + 7 CO2 + diphosphate + 8 CoA + 6 H2O. It participates in mycotoxin biosynthesis. Hybrid PKS-NRPS synthetase; part of the gene cluster that mediates the biosynthesis of ilicicolin H, a 4-hydroxy-2-pyridonealkaloid that has potent and broad antifungal activities by inhibiting the mitochondrial respiration chain. IliA assembles the backbone of ilicicolin H. The PKS portion and trans-acting enoyl reductase iliB work together to construct an octaketide, and two methyl groups are introduced by the MT domain during the chain assembly. The nascent chain is then condensed with tyrosine, catalyzed by the C domain, and the resulting PKS-NRPS hybrid is offloaded by the RED domain to form an advanced tetramic acid intermediate. The biosynthesis of ilicicolin H starts with formation of the tetramic acid by the hybrid PKS-NRPS synthetase iliA with the partnering trans-enoyl reductase iliB since iliA lacks a designated enoylreductase (ER) domain. The cytochrome P450 monooxygenase iliC then catalyzes the ring expansion of the tetramate to the acyclic 2-pyridone. The pericyclase iliD further converts the acyclic 2-pyridone into 8-epi-ilicicolin H. 8-epi-ilicicolin H might then spontaneously convert to ilicicolin H, since ilicicolin H is produced in the absence of the epimerase iliE, in contrast to what was observed for the Talaromyces variabilis ilicolin H biosynthetic pathway. In Neonectria sp. (strain DH2), this protein is Hybrid PKS-NRPS synthetase iliA.